Consider the following 393-residue polypeptide: RNA polymerase II holoenzyme cyclin-like subunit (393 aa).

Residues 51-146 (ICKRLNLRQR…LLEEMEFDMV (96 aa)) form the Cyclin N-terminal domain.

This sequence belongs to the cyclin family. Cyclin C subfamily. In terms of assembly, component of the SRB8-11 complex, a regulatory module of the Mediator complex.

The protein localises to the nucleus. Functionally, component of the SRB8-11 complex. The SRB8-11 complex is a regulatory module of the Mediator complex which is itself involved in regulation of basal and activated RNA polymerase II-dependent transcription. The SRB8-11 complex may be involved in the transcriptional repression of a subset of genes regulated by Mediator. It may inhibit the association of the Mediator complex with RNA polymerase II to form the holoenzyme complex. The SRB8-11 complex phosphorylates the C-terminal domain (CTD) of the largest subunit of RNA polymerase II. This is RNA polymerase II holoenzyme cyclin-like subunit (SSN8) from Mycosarcoma maydis (Corn smut fungus).